A 420-amino-acid chain; its full sequence is Odorant receptor 63a (420 aa).

The Cytoplasmic portion of the chain corresponds to 1 to 43; it reads MYSPEEAAELKRRNYRSIREMIRLSYTVGFNLLDPSRCGQVLR. A helical membrane pass occupies residues 44 to 64; the sequence is IWTIVLSVSSLASLYGHWQML. Over 65-76 the chain is Extracellular; sequence ARYIHDIPRIGE. A helical transmembrane segment spans residues 77–97; it reads TAGTALQFLTSIAKMWYFLFA. The Cytoplasmic segment spans residues 98–150; that stretch reads HRQIYELLRKARCHELLQKCELFERMSDLPVIKEIRQQVESTMNRYWASTRRQ. A helical membrane pass occupies residues 151 to 171; sequence ILIYLYSCICITTNYFINSFV. Topologically, residues 172-217 are extracellular; sequence INLYRYFTKPKGSYDIMLPLPSLYPAWEHKGLEFPYYHIQMYLETC. The helical transmembrane segment at 218-238 threads the bilayer; the sequence is SLYICGMCAVSFDGVFIVLCL. Residues 239–296 lie on the Cytoplasmic side of the membrane; it reads HSVGLMRSLNQMVEQATSELVPPDRRVEYLRCCIYQYQRVANFATEVNNCFRHITFTQ. The chain crosses the membrane as a helical span at residues 297-317; the sequence is FLLSLFNWGLALFQMSVGLGN. Asparagine 318 is a glycosylation site (N-linked (GlcNAc...) asparagine). The Extracellular portion of the chain corresponds to 318–320; the sequence is NSS. A helical transmembrane segment spans residues 321 to 341; sequence ITMIRMTMYLVAAGYQIVVYC. Residues 342-387 are Cytoplasmic-facing; it reads YNGQRFATASEEIANAFYQVRWYGESREFRHLIRMMLMRTNRGFRL. A helical transmembrane segment spans residues 388-408; the sequence is DVSWFMQMSLPTLMAMVRTSG. Residues 409 to 420 are Extracellular-facing; that stretch reads QYFLLLQNVNQK.

Belongs to the insect chemoreceptor superfamily. Heteromeric odorant receptor channel (TC 1.A.69) family. Or63a subfamily. In terms of assembly, interacts with Orco. Complexes exist early in the endomembrane system in olfactory sensory neurons (OSNs), coupling these complexes to the conserved ciliary trafficking pathway.

It localises to the cell membrane. In terms of biological role, odorant receptor which mediates acceptance or avoidance behavior, depending on its substrates. The odorant receptor repertoire encodes a large collection of odor stimuli that vary widely in identity, intensity, and duration. May form a complex with Orco to form odorant-sensing units, providing sensitive and prolonged odorant signaling and calcium permeability. Involved in the behavioral responses to butyl acetate, isoamyl acetate, and hexanoic acid. This Drosophila melanogaster (Fruit fly) protein is Odorant receptor 63a (Or63a).